We begin with the raw amino-acid sequence, 170 residues long: Large ribosomal subunit protein uL10 (170 aa).

It belongs to the universal ribosomal protein uL10 family. In terms of assembly, part of the ribosomal stalk of the 50S ribosomal subunit. The N-terminus interacts with L11 and the large rRNA to form the base of the stalk. The C-terminus forms an elongated spine to which L12 dimers bind in a sequential fashion forming a multimeric L10(L12)X complex.

Its function is as follows. Forms part of the ribosomal stalk, playing a central role in the interaction of the ribosome with GTP-bound translation factors. The sequence is that of Large ribosomal subunit protein uL10 from Fusobacterium nucleatum subsp. nucleatum (strain ATCC 25586 / DSM 15643 / BCRC 10681 / CIP 101130 / JCM 8532 / KCTC 2640 / LMG 13131 / VPI 4355).